The primary structure comprises 451 residues: Phosphoglucosamine mutase (451 aa).

Catalysis depends on Ser-101, which acts as the Phosphoserine intermediate. Mg(2+)-binding residues include Ser-101, Asp-240, Asp-242, and Asp-244. Ser-101 carries the post-translational modification Phosphoserine.

This sequence belongs to the phosphohexose mutase family. Requires Mg(2+) as cofactor. Activated by phosphorylation.

The enzyme catalyses alpha-D-glucosamine 1-phosphate = D-glucosamine 6-phosphate. Its function is as follows. Catalyzes the conversion of glucosamine-6-phosphate to glucosamine-1-phosphate. This Streptococcus pyogenes serotype M2 (strain MGAS10270) protein is Phosphoglucosamine mutase.